The chain runs to 372 residues: Citrate synthase 2 (372 aa).

H257 is an active-site residue. S284 is subject to Phosphoserine. The active site involves D308.

This sequence belongs to the citrate synthase family. Homodimer.

It catalyses the reaction oxaloacetate + acetyl-CoA + H2O = citrate + CoA + H(+). Its pathway is carbohydrate metabolism; tricarboxylic acid cycle; isocitrate from oxaloacetate: step 1/2. In terms of biological role, might regulate the synthesis and function of enzymes involved in later enzymatic steps of Krebs cycle. Loss in activity results in sporulation defect. The sequence is that of Citrate synthase 2 (citZ) from Bacillus subtilis (strain 168).